The sequence spans 299 residues: Ribosomal RNA small subunit methyltransferase H (299 aa).

Residues 45–47 (GGH), D64, F92, D108, and Q115 each bind S-adenosyl-L-methionine. Positions 275–299 (PQSDEQAKNPRSRSAKLRLAQRKEQ) are disordered. Basic residues predominate over residues 284–299 (PRSRSAKLRLAQRKEQ).

This sequence belongs to the methyltransferase superfamily. RsmH family.

Its subcellular location is the cytoplasm. The catalysed reaction is cytidine(1402) in 16S rRNA + S-adenosyl-L-methionine = N(4)-methylcytidine(1402) in 16S rRNA + S-adenosyl-L-homocysteine + H(+). Specifically methylates the N4 position of cytidine in position 1402 (C1402) of 16S rRNA. In Gloeothece citriformis (strain PCC 7424) (Cyanothece sp. (strain PCC 7424)), this protein is Ribosomal RNA small subunit methyltransferase H.